Consider the following 420-residue polypeptide: Probable serine hydroxymethyltransferase (420 aa).

(6S)-5,6,7,8-tetrahydrofolate contacts are provided by residues L121 and 125–127 (GHL). An N6-(pyridoxal phosphate)lysine modification is found at K230. (6S)-5,6,7,8-tetrahydrofolate is bound by residues E246 and 354–356 (SPF).

This sequence belongs to the SHMT family. In terms of assembly, homodimer. Requires pyridoxal 5'-phosphate as cofactor.

It localises to the cytoplasm. The catalysed reaction is (6R)-5,10-methylene-5,6,7,8-tetrahydrofolate + glycine + H2O = (6S)-5,6,7,8-tetrahydrofolate + L-serine. The protein operates within one-carbon metabolism; tetrahydrofolate interconversion. Catalyzes the reversible interconversion of serine and glycine with tetrahydrofolate (THF) serving as the one-carbon carrier. This reaction serves as the major source of one-carbon groups required for the biosynthesis of purines, thymidylate, methionine, and other important biomolecules. The polypeptide is Probable serine hydroxymethyltransferase (Rickettsia bellii (strain RML369-C)).